Reading from the N-terminus, the 242-residue chain is Biosynthetic peptidoglycan transglycosylase (242 aa).

The helical transmembrane segment at 19–39 (ILAALAVFWGGGIALFSVVPV) threads the bilayer.

The protein belongs to the glycosyltransferase 51 family.

It localises to the cell inner membrane. The catalysed reaction is [GlcNAc-(1-&gt;4)-Mur2Ac(oyl-L-Ala-gamma-D-Glu-L-Lys-D-Ala-D-Ala)](n)-di-trans,octa-cis-undecaprenyl diphosphate + beta-D-GlcNAc-(1-&gt;4)-Mur2Ac(oyl-L-Ala-gamma-D-Glu-L-Lys-D-Ala-D-Ala)-di-trans,octa-cis-undecaprenyl diphosphate = [GlcNAc-(1-&gt;4)-Mur2Ac(oyl-L-Ala-gamma-D-Glu-L-Lys-D-Ala-D-Ala)](n+1)-di-trans,octa-cis-undecaprenyl diphosphate + di-trans,octa-cis-undecaprenyl diphosphate + H(+). It participates in cell wall biogenesis; peptidoglycan biosynthesis. In terms of biological role, peptidoglycan polymerase that catalyzes glycan chain elongation from lipid-linked precursors. The sequence is that of Biosynthetic peptidoglycan transglycosylase from Salmonella newport (strain SL254).